Reading from the N-terminus, the 2499-residue chain is Probable polyketide synthase 23 (2499 aa).

One can recognise a Ketosynthase family 3 (KS3) domain in the interval 11 to 430 (DNQVAIVGLG…GSNACVLLSE (420 aa)). Catalysis depends on for beta-ketoacyl synthase activity residues Cys177, His316, and His354. Residues 623 to 656 (GITPSIIVGHSLGEVASAFCSGMIDLETACFVIY) form an acyl/malonyl transferases region. The For acyl/malonyl transferase activity role is filled by Ser633. The tract at residues 924–1044 (INQLGNKNEL…SRILMKSLDV (121 aa)) is N-terminal hotdog fold. The PKS/mFAS DH domain maps to 924-1209 (INQLGNKNEL…IASTLSTNID (286 aa)). The active-site Proton acceptor; for dehydratase activity is the His956. The interval 1059–1209 (NWSTLKREQL…IASTLSTNID (151 aa)) is C-terminal hotdog fold. The active-site Proton donor; for dehydratase activity is the Asp1121. Residues 2414-2491 (EKEFSIRQDI…QIINIVTTKV (78 aa)) form the Carrier domain. An O-(pantetheine 4'-phosphoryl)serine modification is found at Ser2451.

It depends on pantetheine 4'-phosphate as a cofactor.

Probable polyketide synthase. The chain is Probable polyketide synthase 23 (pks23) from Dictyostelium discoideum (Social amoeba).